Consider the following 88-residue polypeptide: Small ribosomal subunit protein bS16 (88 aa).

This sequence belongs to the bacterial ribosomal protein bS16 family.

This is Small ribosomal subunit protein bS16 from Halothermothrix orenii (strain H 168 / OCM 544 / DSM 9562).